The sequence spans 116 residues: Cell division protein FtsL (116 aa).

Topologically, residues methionine 1–threonine 24 are cytoplasmic. A helical transmembrane segment spans residues valine 25–valine 45. Topologically, residues arginine 46–glutamate 116 are periplasmic.

It belongs to the FtsL family. In terms of assembly, part of a complex composed of FtsB, FtsL and FtsQ.

It is found in the cell inner membrane. Functionally, essential cell division protein. May link together the upstream cell division proteins, which are predominantly cytoplasmic, with the downstream cell division proteins, which are predominantly periplasmic. This is Cell division protein FtsL from Francisella tularensis subsp. tularensis (strain SCHU S4 / Schu 4).